A 250-amino-acid chain; its full sequence is 5-oxoprolinase subunit A (250 aa).

Belongs to the LamB/PxpA family. In terms of assembly, forms a complex composed of PxpA, PxpB and PxpC.

It catalyses the reaction 5-oxo-L-proline + ATP + 2 H2O = L-glutamate + ADP + phosphate + H(+). Its function is as follows. Catalyzes the cleavage of 5-oxoproline to form L-glutamate coupled to the hydrolysis of ATP to ADP and inorganic phosphate. This Chromohalobacter salexigens (strain ATCC BAA-138 / DSM 3043 / CIP 106854 / NCIMB 13768 / 1H11) protein is 5-oxoprolinase subunit A.